The chain runs to 587 residues: Phosphomethylpyrimidine synthase (587 aa).

Substrate contacts are provided by residues N218, M247, Y276, H312, 332–334 (SRG), 373–376 (DGLR), and E412. H416 lines the Zn(2+) pocket. Y439 serves as a coordination point for substrate. H480 provides a ligand contact to Zn(2+). [4Fe-4S] cluster-binding residues include C560, C563, and C568.

Belongs to the ThiC family. It depends on [4Fe-4S] cluster as a cofactor.

The enzyme catalyses 5-amino-1-(5-phospho-beta-D-ribosyl)imidazole + S-adenosyl-L-methionine = 4-amino-2-methyl-5-(phosphooxymethyl)pyrimidine + CO + 5'-deoxyadenosine + formate + L-methionine + 3 H(+). Its pathway is cofactor biosynthesis; thiamine diphosphate biosynthesis. Its function is as follows. Catalyzes the synthesis of the hydroxymethylpyrimidine phosphate (HMP-P) moiety of thiamine from aminoimidazole ribotide (AIR) in a radical S-adenosyl-L-methionine (SAM)-dependent reaction. This is Phosphomethylpyrimidine synthase from Porphyromonas gingivalis (strain ATCC 33277 / DSM 20709 / CIP 103683 / JCM 12257 / NCTC 11834 / 2561).